Consider the following 117-residue polypeptide: DNA-directed RNA polymerase subunit omega (117 aa).

This sequence belongs to the RNA polymerase subunit omega family. As to quaternary structure, the RNAP catalytic core consists of 2 alpha, 1 beta, 1 beta' and 1 omega subunit. When a sigma factor is associated with the core the holoenzyme is formed, which can initiate transcription.

It catalyses the reaction RNA(n) + a ribonucleoside 5'-triphosphate = RNA(n+1) + diphosphate. Promotes RNA polymerase assembly. Latches the N- and C-terminal regions of the beta' subunit thereby facilitating its interaction with the beta and alpha subunits. In Jannaschia sp. (strain CCS1), this protein is DNA-directed RNA polymerase subunit omega.